A 192-amino-acid chain; its full sequence is Large ribosomal subunit protein bL25 (192 aa).

It belongs to the bacterial ribosomal protein bL25 family. CTC subfamily. Part of the 50S ribosomal subunit; part of the 5S rRNA/L5/L18/L25 subcomplex. Contacts the 5S rRNA. Binds to the 5S rRNA independently of L5 and L18.

This is one of the proteins that binds to the 5S RNA in the ribosome where it forms part of the central protuberance. This Cytophaga hutchinsonii (strain ATCC 33406 / DSM 1761 / CIP 103989 / NBRC 15051 / NCIMB 9469 / D465) protein is Large ribosomal subunit protein bL25.